Reading from the N-terminus, the 661-residue chain is Heme transporter BhuA (661 aa).

A signal peptide spans 1-23; sequence MKFTRTLVLVSTSLLATVATSQA. The TBDR plug domain occupies 48 to 159; that stretch reads KDNIEATGGT…AAGAIRYETV (112 aa). In terms of domain architecture, TBDR beta-barrel spans 170 to 661; that stretch reads TFGARIIGSY…TFTFQTAFKF (492 aa).

Belongs to the TonB-dependent receptor family.

It is found in the cell outer membrane. Its function is as follows. Heme transporter playing an important role in stationary-phase iron acquisition and required for maintenance of chronic infection in mice. This chain is Heme transporter BhuA (bhuA), found in Brucella abortus (strain 2308).